The following is a 370-amino-acid chain: tRNA-specific 2-thiouridylase MnmA 1 (370 aa).

ATP is bound by residues 9–16 (GMSGGVDS) and methionine 35. Positions 95-97 (NPD) are interaction with target base in tRNA. Cysteine 100 serves as the catalytic Nucleophile. Cysteine 100 and cysteine 196 are disulfide-bonded. Glycine 124 is a binding site for ATP. Residues 146–148 (KDQ) are interaction with tRNA. The Cysteine persulfide intermediate role is filled by cysteine 196. Positions 306–307 (RY) are interaction with tRNA.

This sequence belongs to the MnmA/TRMU family.

The protein localises to the cytoplasm. The catalysed reaction is S-sulfanyl-L-cysteinyl-[protein] + uridine(34) in tRNA + AH2 + ATP = 2-thiouridine(34) in tRNA + L-cysteinyl-[protein] + A + AMP + diphosphate + H(+). Catalyzes the 2-thiolation of uridine at the wobble position (U34) of tRNA, leading to the formation of s(2)U34. The chain is tRNA-specific 2-thiouridylase MnmA 1 from Geobacillus kaustophilus (strain HTA426).